Consider the following 181-residue polypeptide: Kappa-casein (181 aa).

The signal sequence occupies residues 1 to 21 (MMRNFIVVVNILALTLPFLAA). Thr123 is subject to Phosphothreonine. Residues Thr134, Thr144, and Thr155 are each glycosylated (O-linked (GalNAc...) threonine). Ser162 bears the Phosphoserine; alternate mark. A glycan (O-linked (GalNAc...) serine; alternate) is linked at Ser162. At Ser178 the chain carries Phosphoserine.

It belongs to the kappa-casein family. Mammary gland specific. Secreted in milk.

The protein localises to the secreted. Functionally, kappa-casein stabilizes micelle formation, preventing casein precipitation in milk. The protein is Kappa-casein (Csn3) of Mus musculus (Mouse).